The sequence spans 59 residues: Large ribosomal subunit protein bL32 (59 aa).

Basic residues predominate over residues 1 to 20 (MAVPKKKTSKGKRNQRHATW). Residues 1-22 (MAVPKKKTSKGKRNQRHATWKG) are disordered.

It belongs to the bacterial ribosomal protein bL32 family.

In Prochlorococcus marinus (strain NATL1A), this protein is Large ribosomal subunit protein bL32.